A 253-amino-acid polypeptide reads, in one-letter code: uncharacterized protein (253 aa).

The next 6 membrane-spanning stretches (helical) occupy residues 17–37 (MWLL…HIIA), 46–66 (IFGF…VFVF), 93–113 (LAAS…YGIW), 139–159 (MYGL…WTVF), 172–192 (AMVL…SPLV), and 222–242 (IHLS…LLIM).

It is found in the cell membrane. This is an uncharacterized protein from Bacillus subtilis (strain 168).